The primary structure comprises 361 residues: MALPGDPRRLCRLVQEGRLRDLQEELAVARGCRGPAGDTLLHCAARHGRQDILAYLVEAWSMDIEATNRDYKRPLHEAASMGHRDCVRYLLGRGAVVDSLKKADWTPLMMACTRKNLDVIQDLVEHGANPLLKNKDGWNSFHIASREGHPVILRYLLTVCPDAWKTESNIRRTPLHTAAMHGCLEAVQVLLERCHYEPDCRDNCGVTPFMDAIQCGHVSIAKLLLEQHKACSSAADSMGAQALHRAAVTGQDEAIRFLVCGLGIDVDVRAKSSQLTALHYAAKEGQTNTVQTLLSLGADINSTDERNRSVLHLACAGQHVACTRLLLQSGLKDSEDLTGTLAQQLTRSVDILQDFDHDVKS.

ANK repeat units lie at residues 36 to 66 (AGDT…DIEA), 70 to 99 (DYKR…VVDS), 103 to 132 (ADWT…NPLL), 136 to 165 (DGWN…DAWK), 170 to 200 (IRRT…EPDC), 204 to 233 (CGVT…ACSS), 238 to 268 (MGAQ…DVDV), 273 to 302 (SQLT…DINS), and 306 to 335 (RNRS…KDSE).

In terms of assembly, interacts with AARS; the interaction is direct. In terms of tissue distribution, widely expressed in brain (at protein level).

The protein resides in the cytoplasm. The protein localises to the nucleus. Functionally, required to prevent the misactivation of serine (Ser) with tRNA(Ala) by promoting the hydrolysis of Ser-mischarged tRNA(Ala), thereby playing a role in translational fidelity. Binds directly to the catalytic domain of AARS/AlaRS and captures Ser that is misactivated by AARS/AlaRS, preventing the charging of Ser adenylates to tRNA(Ala) and precluding Ser misincorporation in nascent peptides. The polypeptide is Ankyrin repeat domain-containing protein 16 (Mus musculus (Mouse)).